The following is a 153-amino-acid chain: Peptide methionine sulfoxide reductase MsrA (153 aa).

The active site involves Cys10.

Belongs to the MsrA Met sulfoxide reductase family.

It carries out the reaction L-methionyl-[protein] + [thioredoxin]-disulfide + H2O = L-methionyl-(S)-S-oxide-[protein] + [thioredoxin]-dithiol. It catalyses the reaction [thioredoxin]-disulfide + L-methionine + H2O = L-methionine (S)-S-oxide + [thioredoxin]-dithiol. Its function is as follows. Has an important function as a repair enzyme for proteins that have been inactivated by oxidation. Catalyzes the reversible oxidation-reduction of methionine sulfoxide in proteins to methionine. This is Peptide methionine sulfoxide reductase MsrA from Methanococcoides burtonii (strain DSM 6242 / NBRC 107633 / OCM 468 / ACE-M).